Consider the following 246-residue polypeptide: Major pollen allergen Cyn d 1 (246 aa).

Asn9 carries an N-linked (GlcNAc...) asparagine glycan. In terms of domain architecture, Expansin-like EG45 spans Gly39–Gly145. In terms of domain architecture, Expansin-like CBD spans His159–Ser240.

The protein belongs to the expansin family. Expansin B subfamily.

It localises to the secreted. This chain is Major pollen allergen Cyn d 1 (CYND1), found in Cynodon dactylon (Bermuda grass).